A 603-amino-acid chain; its full sequence is Polypeptide N-acetylgalactosaminyltransferase 9 (603 aa).

The Cytoplasmic segment spans residues 1-6; it reads MAVARK. A helical; Signal-anchor for type II membrane protein transmembrane segment spans residues 7–29; it reads IRTLLTVNILVFVGIVLFSVYCR. Over 30 to 603 the chain is Lumenal; it reads LQGRSQELVR…IRNWIKHARH (574 aa). 2 cysteine pairs are disulfide-bonded: C141–C372 and C363–C442. The interval 150–261 is catalytic subdomain A; the sequence is LPQVSVVFIF…TGWAEPALSR (112 aa). Residues D191 and R222 each coordinate substrate. D245, H247, and H377 together coordinate Mn(2+). The segment at 318–380 is catalytic subdomain B; sequence PIRTPAMIGC…PCSRVAHIER (63 aa). Positions 380 and 385 each coordinate substrate. A glycan (N-linked (GlcNAc...) asparagine) is linked at N460. The Ricin B-type lectin domain maps to 464–600; it reads TYGEVRNSKA…KWMIRNWIKH (137 aa). 3 disulfides stabilise this stretch: C477–C493, C525–C540, and C567–C587.

It belongs to the glycosyltransferase 2 family. GalNAc-T subfamily. It depends on Mn(2+) as a cofactor. Specifically expressed in brain. Not expressed in heart, placenta, lung, liver, skeletal muscle, kidney, pancreas, spleen, thymus, prostate, testis, ovary, small intestine, colon and leukocyte. In brain, it is expressed in cerebellum, frontal lobe, temporal lobe, putamen and spinal cord, weakly expressed in cerebral cortex. Not expressed in medulla and occipital pole.

Its subcellular location is the golgi apparatus membrane. The enzyme catalyses L-seryl-[protein] + UDP-N-acetyl-alpha-D-galactosamine = a 3-O-[N-acetyl-alpha-D-galactosaminyl]-L-seryl-[protein] + UDP + H(+). It catalyses the reaction L-threonyl-[protein] + UDP-N-acetyl-alpha-D-galactosamine = a 3-O-[N-acetyl-alpha-D-galactosaminyl]-L-threonyl-[protein] + UDP + H(+). Its pathway is protein modification; protein glycosylation. In terms of biological role, catalyzes the initial reaction in O-linked oligosaccharide biosynthesis, the transfer of an N-acetyl-D-galactosamine residue to a serine or threonine residue on the protein receptor. Does not glycosylate apomucin or SDC3. The polypeptide is Polypeptide N-acetylgalactosaminyltransferase 9 (GALNT9) (Homo sapiens (Human)).